Reading from the N-terminus, the 331-residue chain is UBX domain-containing protein 2B (331 aa).

Disordered regions lie at residues 1–26 and 38–63; these read MAEGGGAEPEEQERRSSRPRPPSARD and EMKCKSSKPDRSTATAFKSPRTPPLR. Residue A2 is modified to N-acetylalanine. The span at 38-48 shows a compositional bias: basic and acidic residues; the sequence is EMKCKSSKPDR. S56 is subject to Phosphoserine. T59 carries the phosphothreonine modification. A Phosphoserine modification is found at S66. An SEP domain is found at 141–206; that stretch reads DVQILLRLWS…MEDHQDQEYI (66 aa). S231, S234, and S235 each carry phosphoserine. Residues 252–329 enclose the UBX domain; the sequence is DSVPTTKIQI…DILNTVILQQ (78 aa).

It belongs to the NSFL1C family. In terms of assembly, interacts with VCP. Does not bind ubiquitin. Present at high level in brain. Also present in liver, kidney, spleen, testis, lung and heart (at protein level).

It is found in the nucleus. Its subcellular location is the cytoplasm. The protein localises to the cytosol. It localises to the endoplasmic reticulum. The protein resides in the golgi apparatus. It is found in the cytoskeleton. Its subcellular location is the microtubule organizing center. The protein localises to the centrosome. Its function is as follows. Adapter protein required for Golgi and endoplasmic reticulum biogenesis. Involved in Golgi and endoplasmic reticulum maintenance during interphase and in their reassembly at the end of mitosis. The complex formed with VCP has membrane fusion activity; membrane fusion activity requires USO1-GOLGA2 tethering and BET1L. VCPIP1 is also required, but not its deubiquitinating activity. Together with NSFL1C/p47, regulates the centrosomal levels of kinase AURKA/Aurora A during mitotic progression by promoting AURKA removal from centrosomes in prophase. Also, regulates spindle orientation during mitosis. This is UBX domain-containing protein 2B (Ubxn2b) from Rattus norvegicus (Rat).